The primary structure comprises 327 residues: uncharacterized protein (327 aa).

The S4 RNA-binding domain occupies 12–84; it reads MRIDRYLTQQ…IPITILYEDD (73 aa). Asp137 is a catalytic residue.

This sequence belongs to the pseudouridine synthase RluA family.

It carries out the reaction a uridine in RNA = a pseudouridine in RNA. This is an uncharacterized protein from Chlorobaculum parvum (strain DSM 263 / NCIMB 8327) (Chlorobium vibrioforme subsp. thiosulfatophilum).